A 292-amino-acid polypeptide reads, in one-letter code: Sulfhydrogenase 1 subunit gamma (292 aa).

The region spanning 15–115 (YALHRVKVLK…RGPYGNGFPV (101 aa)) is the FAD-binding FR-type domain. [2Fe-2S] cluster contacts are provided by Cys253, Cys258, Cys261, and Cys273.

As to quaternary structure, heterotetramer of alpha, beta, gamma and delta subunits. The nickel-containing alpha and delta subunits constitute the hydrogenase activity. The beta and gamma subunits (flavin-containing dimer) constitute the sulfur reductase activity. FAD is required as a cofactor. It depends on [2Fe-2S] cluster as a cofactor.

The protein localises to the cytoplasm. The enzyme catalyses n sulfur + H2 = (n-1) sulfur + hydrogen sulfide + H(+). With respect to regulation, stimulated by rubredoxin at pH 7.6 but not ferredoxin. In terms of biological role, part of a bifunctional enzyme complex that functions as an NADPH-dependent hydrogen-evolving hydrogenase with sulfur reducing activity. May play a role in hydrogen cycling during fermentative growth. Activity not exhibited with NAD. The beta and gamma subunits form the sulfur reducing component that catalyzes the cytoplasmic production of hydrogen sulfide in the presence of elemental sulfur. Not active in the presence of sodium sulfate, sodium sulfite, sodium thiosulfate or cysteine. This Pyrococcus furiosus (strain ATCC 43587 / DSM 3638 / JCM 8422 / Vc1) protein is Sulfhydrogenase 1 subunit gamma.